A 334-amino-acid chain; its full sequence is S-adenosylmethionine:tRNA ribosyltransferase-isomerase (334 aa).

The protein belongs to the QueA family. Monomer.

The protein resides in the cytoplasm. It catalyses the reaction 7-aminomethyl-7-carbaguanosine(34) in tRNA + S-adenosyl-L-methionine = epoxyqueuosine(34) in tRNA + adenine + L-methionine + 2 H(+). It participates in tRNA modification; tRNA-queuosine biosynthesis. Functionally, transfers and isomerizes the ribose moiety from AdoMet to the 7-aminomethyl group of 7-deazaguanine (preQ1-tRNA) to give epoxyqueuosine (oQ-tRNA). In Thermosipho melanesiensis (strain DSM 12029 / CIP 104789 / BI429), this protein is S-adenosylmethionine:tRNA ribosyltransferase-isomerase.